The primary structure comprises 333 residues: Serine/threonine-protein phosphatase 4 catalytic subunit 1 (333 aa).

Residues 1–28 (MALACTDSANSTFSRVDSPTSGPSDQLT) are disordered. The span at 7–27 (DSANSTFSRVDSPTSGPSDQL) shows a compositional bias: polar residues. 4 residues coordinate Mn(2+): aspartate 79, histidine 81, aspartate 107, and asparagine 139. Histidine 140 functions as the Proton donor in the catalytic mechanism. Histidine 189 and histidine 264 together coordinate Mn(2+). Leucine 333 is modified (leucine methyl ester).

This sequence belongs to the PPP phosphatase family. PP-4 (PP-X) subfamily. Serine/threonine-protein phosphatase 4 (PP4) occurs in different assemblies of the catalytic and one or more regulatory subunits. The regulatory subunits are likely to be ppfr-1, ppfr-2, ppfr-4 and smk-1. Interacts with mei-1. Mn(2+) is required as a cofactor. Methylation at the C-terminal Leu-333 is critical for interactions with regulatory subunits.

Its subcellular location is the cytoplasm. It is found in the cytoskeleton. The protein resides in the microtubule organizing center. It localises to the centrosome. The enzyme catalyses O-phospho-L-seryl-[protein] + H2O = L-seryl-[protein] + phosphate. It catalyses the reaction O-phospho-L-threonyl-[protein] + H2O = L-threonyl-[protein] + phosphate. Its function is as follows. Protein phosphatase which plays an essential role in meiosis and in early embryonic mitosis. During spermatocyte meiosis and the first embryonic mitosis, regulates centrosome maturation, and thus spindle formation, by recruiting some of the components of the pericentriolar material (PCM). During oocyte meiosis I, regulates meiotic chromosome dynamics including synapsis-independent chromosome pairing, restriction of synapsis to homologous chromosomes, programmed DNA double-strand break initiation and crossover formation resulting in chiasma formation. During oocyte meiosis II and probably together with regulatory subunit ppfr-1, may regulate microtubule severing by dephosphorylating and activating mei-1, a component of the katanin microtubule severing complex. The sequence is that of Serine/threonine-protein phosphatase 4 catalytic subunit 1 from Caenorhabditis elegans.